Here is a 179-residue protein sequence, read N- to C-terminus: Large ribosomal subunit protein uL5 (179 aa).

This sequence belongs to the universal ribosomal protein uL5 family. As to quaternary structure, part of the 50S ribosomal subunit; part of the 5S rRNA/L5/L18/L25 subcomplex. Contacts the 5S rRNA and the P site tRNA. Forms a bridge to the 30S subunit in the 70S ribosome.

Functionally, this is one of the proteins that bind and probably mediate the attachment of the 5S RNA into the large ribosomal subunit, where it forms part of the central protuberance. In the 70S ribosome it contacts protein S13 of the 30S subunit (bridge B1b), connecting the 2 subunits; this bridge is implicated in subunit movement. Contacts the P site tRNA; the 5S rRNA and some of its associated proteins might help stabilize positioning of ribosome-bound tRNAs. The protein is Large ribosomal subunit protein uL5 of Pseudomonas putida (strain W619).